Consider the following 613-residue polypeptide: Autophagy-related protein 22-2 (613 aa).

The interval 1 to 30 (MAFNSTPPVSPGGEAQQRPPRFPGEDTTPT) is disordered. The helical transmembrane segment at 41-61 (YGIAAEVFAVCGVGSFLPLTL) threads the bilayer. Asparagine 90 is a glycosylation site (N-linked (GlcNAc...) asparagine). The next 7 helical transmembrane spans lie at 120–140 (SFAM…LISF), 167–187 (LFIF…VVGV), 189–209 (CLGS…ANDP), 278–298 (VGLG…MLFA), 307–327 (ISGT…WFSF), 382–402 (VIIF…VSGT), and 418–438 (VGLL…LWPV). Asparagine 448 is a glycosylation site (N-linked (GlcNAc...) asparagine). 4 consecutive transmembrane segments (helical) span residues 453–473 (LCIA…IPLF), 477–497 (GVVG…HGLV), 508–528 (FFGL…YAAT), and 553–573 (GFFF…MVNA). Residues 592–613 (REHASEYGGPSEEAEGLLARDI) are disordered.

Belongs to the ATG22 family.

It localises to the vacuole membrane. Its function is as follows. Vacuolar effluxer which mediate the efflux of amino acids resulting from autophagic degradation. The release of autophagic amino acids allows the maintenance of protein synthesis and viability during nitrogen starvation. This is Autophagy-related protein 22-2 (atg22-2) from Aspergillus fumigatus (strain ATCC MYA-4609 / CBS 101355 / FGSC A1100 / Af293) (Neosartorya fumigata).